The chain runs to 429 residues: Glutamate-1-semialdehyde 2,1-aminomutase (429 aa).

Lys-265 is modified (N6-(pyridoxal phosphate)lysine).

Belongs to the class-III pyridoxal-phosphate-dependent aminotransferase family. HemL subfamily. As to quaternary structure, homodimer. The cofactor is pyridoxal 5'-phosphate.

The protein localises to the cytoplasm. It carries out the reaction (S)-4-amino-5-oxopentanoate = 5-aminolevulinate. It participates in porphyrin-containing compound metabolism; protoporphyrin-IX biosynthesis; 5-aminolevulinate from L-glutamyl-tRNA(Glu): step 2/2. This is Glutamate-1-semialdehyde 2,1-aminomutase from Legionella pneumophila (strain Corby).